The sequence spans 211 residues: Protein-L-isoaspartate O-methyltransferase (211 aa).

The active site involves S60.

This sequence belongs to the methyltransferase superfamily. L-isoaspartyl/D-aspartyl protein methyltransferase family.

The protein resides in the cytoplasm. It catalyses the reaction [protein]-L-isoaspartate + S-adenosyl-L-methionine = [protein]-L-isoaspartate alpha-methyl ester + S-adenosyl-L-homocysteine. Functionally, catalyzes the methyl esterification of L-isoaspartyl residues in peptides and proteins that result from spontaneous decomposition of normal L-aspartyl and L-asparaginyl residues. It plays a role in the repair and/or degradation of damaged proteins. The polypeptide is Protein-L-isoaspartate O-methyltransferase (Pseudomonas savastanoi pv. phaseolicola (strain 1448A / Race 6) (Pseudomonas syringae pv. phaseolicola (strain 1448A / Race 6))).